Reading from the N-terminus, the 387-residue chain is Large ribosomal subunit protein uL3 (387 aa).

At S24 the chain carries Phosphoserine. K39 is covalently cross-linked (Glycyl lysine isopeptide (Lys-Gly) (interchain with G-Cter in ubiquitin)). A Phosphothreonine modification is found at T103. K136 participates in a covalent cross-link: Glycyl lysine isopeptide (Lys-Gly) (interchain with G-Cter in ubiquitin). S156 is modified (phosphoserine). The residue at position 243 (H243) is a Pros-methylhistidine. S297 carries the post-translational modification Phosphoserine.

It belongs to the universal ribosomal protein uL3 family. In terms of assembly, component of the large ribosomal subunit (LSU). Mature yeast ribosomes consist of a small (40S) and a large (60S) subunit. The 40S small subunit contains 1 molecule of ribosomal RNA (18S rRNA) and 33 different proteins (encoded by 57 genes). The large 60S subunit contains 3 rRNA molecules (25S, 5.8S and 5S rRNA) and 46 different proteins (encoded by 81 genes). uL3 forms together with ES39L one of the contact sites for the signal recognition particle that targets ribosomes to the endoplasmic reticulum membrane. In terms of processing, methylation at His-243 by HPM1 is required for proper 60S subunit assembly and promotes translational elongation fidelity.

It is found in the cytoplasm. Component of the ribosome, a large ribonucleoprotein complex responsible for the synthesis of proteins in the cell. The small ribosomal subunit (SSU) binds messenger RNAs (mRNAs) and translates the encoded message by selecting cognate aminoacyl-transfer RNA (tRNA) molecules. The large subunit (LSU) contains the ribosomal catalytic site termed the peptidyl transferase center (PTC), which catalyzes the formation of peptide bonds, thereby polymerizing the amino acids delivered by tRNAs into a polypeptide chain. The nascent polypeptides leave the ribosome through a tunnel in the LSU and interact with protein factors that function in enzymatic processing, targeting, and the membrane insertion of nascent chains at the exit of the ribosomal tunnel. uL3 plays a role in coordinating processes of accommodating the aminoacyl-tRNA in the PTC. This chain is Large ribosomal subunit protein uL3, found in Saccharomyces cerevisiae (strain ATCC 204508 / S288c) (Baker's yeast).